The chain runs to 260 residues: Uridylate kinase (260 aa).

29 to 32 is a binding site for ATP; it reads KLSG. The tract at residues 37–42 is involved in allosteric activation by GTP; the sequence is GDLGYG. Glycine 71 provides a ligand contact to UMP. ATP-binding residues include glycine 72 and arginine 76. UMP-binding positions include aspartate 91 and 152–159; that span reads SGNPFFTT. Threonine 179, tyrosine 185, and aspartate 188 together coordinate ATP.

It belongs to the UMP kinase family. As to quaternary structure, homohexamer.

Its subcellular location is the cytoplasm. The enzyme catalyses UMP + ATP = UDP + ADP. The protein operates within pyrimidine metabolism; CTP biosynthesis via de novo pathway; UDP from UMP (UMPK route): step 1/1. Its activity is regulated as follows. Allosterically activated by GTP. Inhibited by UTP. Catalyzes the reversible phosphorylation of UMP to UDP. This Synechocystis sp. (strain ATCC 27184 / PCC 6803 / Kazusa) protein is Uridylate kinase.